The following is a 214-amino-acid chain: MASLFKKKTVDDIIKEQNRELRGTQRTITRDRAALEKQERQLELEIKKMAKTGNKEACKVLAKQLVQLRKQKNRTYAVSSKVTSMSTQTKVMNSQMKMAGAMSTTAKTMQAVNKKMDPQKTLQTMQNFQKENMKMEMTEEMINDTLDDIFDASDEEEESQDIVNQVLDEIGIEISGKMAKAPSAARGLPSASTSKASTISDEEIERQLKALGVD.

The stretch at 25 to 55 (QRTITRDRAALEKQERQLELEIKKMAKTGNK) forms a coiled coil. Residues 179–201 (AKAPSAARGLPSASTSKASTISD) form a disordered region. Positions 190–199 (SASTSKASTI) are enriched in polar residues. The MIT-interacting motif signature appears at 202-212 (EEIERQLKALG).

Belongs to the SNF7 family. In terms of assembly, probable core component of the endosomal sorting required for transport complex III (ESCRT-III). ESCRT-III components are thought to multimerize to form a flat lattice on the perimeter membrane of the endosome.

The protein localises to the cytoplasm. The protein resides in the cytosol. Its subcellular location is the late endosome membrane. Probable core component of the endosomal sorting required for transport complex III (ESCRT-III) which is involved in multivesicular bodies (MVBs) formation and sorting of endosomal cargo proteins into MVBs. MVBs contain intraluminal vesicles (ILVs) that are generated by invagination and scission from the limiting membrane of the endosome and mostly are delivered to lysosomes enabling degradation of membrane proteins, such as stimulated growth factor receptors, lysosomal enzymes and lipids. This is Charged multivesicular body protein 2b (CHMP2B) from Gallus gallus (Chicken).